A 125-amino-acid chain; its full sequence is Large ribosomal subunit protein bL20 (125 aa).

This sequence belongs to the bacterial ribosomal protein bL20 family.

Functionally, binds directly to 23S ribosomal RNA and is necessary for the in vitro assembly process of the 50S ribosomal subunit. It is not involved in the protein synthesizing functions of that subunit. This chain is Large ribosomal subunit protein bL20, found in Thermobifida fusca (strain YX).